The primary structure comprises 166 residues: Phosphopantetheine adenylyltransferase (166 aa).

Ser11 serves as a coordination point for substrate. Residues 11-12 and His19 each bind ATP; that span reads SF. Substrate is bound by residues Lys43, Ala76, and Arg90. Residues 91 to 93, Glu101, and 126 to 132 each bind ATP; these read GLR and LQPISSS.

This sequence belongs to the bacterial CoaD family. In terms of assembly, homohexamer. Mg(2+) serves as cofactor.

The protein resides in the cytoplasm. The catalysed reaction is (R)-4'-phosphopantetheine + ATP + H(+) = 3'-dephospho-CoA + diphosphate. The protein operates within cofactor biosynthesis; coenzyme A biosynthesis; CoA from (R)-pantothenate: step 4/5. Reversibly transfers an adenylyl group from ATP to 4'-phosphopantetheine, yielding dephospho-CoA (dPCoA) and pyrophosphate. This is Phosphopantetheine adenylyltransferase from Streptococcus equi subsp. zooepidemicus (strain H70).